Reading from the N-terminus, the 284-residue chain is uncharacterized protein (284 aa).

It belongs to the AtsA family.

This is an uncharacterized protein from Mycobacterium leprae (strain TN).